Consider the following 349-residue polypeptide: Sensory histidine kinase/phosphatase NtrB (349 aa).

A PAS domain is found at 5-78 (IQPDAGQILN…SLAAGQGFTD (74 aa)). The 214-residue stretch at 136–349 (GLAHEIKNPL…EFSVYLPIRK (214 aa)) folds into the Histidine kinase domain. A Phosphohistidine; by autocatalysis modification is found at histidine 139. Lysine 329 is a binding site for ATP.

Autophosphorylated.

It localises to the cytoplasm. It catalyses the reaction ATP + protein L-histidine = ADP + protein N-phospho-L-histidine.. Its function is as follows. Member of the two-component regulatory system NtrB/NtrC, which controls expression of the nitrogen-regulated (ntr) genes in response to nitrogen limitation. Under conditions of nitrogen limitation, NtrB autophosphorylates and transfers the phosphoryl group to NtrC. In the presence of nitrogen, acts as a phosphatase that dephosphorylates and inactivates NtrC. This is Sensory histidine kinase/phosphatase NtrB (glnL) from Salmonella typhi.